The sequence spans 204 residues: Proteasome subunit beta (204 aa).

A propeptide spans Met-1 to Gly-8 (removed in mature form; by autocatalysis). Residue Thr-9 is the Nucleophile of the active site.

It belongs to the peptidase T1B family. In terms of assembly, the 20S proteasome core is composed of 14 alpha and 14 beta subunits that assemble into four stacked heptameric rings, resulting in a barrel-shaped structure. The two inner rings, each composed of seven catalytic beta subunits, are sandwiched by two outer rings, each composed of seven alpha subunits. The catalytic chamber with the active sites is on the inside of the barrel. Has a gated structure, the ends of the cylinder being occluded by the N-termini of the alpha-subunits. Is capped at one or both ends by the proteasome regulatory ATPase, PAN.

The protein localises to the cytoplasm. The catalysed reaction is Cleavage of peptide bonds with very broad specificity.. Its activity is regulated as follows. The formation of the proteasomal ATPase PAN-20S proteasome complex, via the docking of the C-termini of PAN into the intersubunit pockets in the alpha-rings, triggers opening of the gate for substrate entry. Interconversion between the open-gate and close-gate conformations leads to a dynamic regulation of the 20S proteasome proteolysis activity. In terms of biological role, component of the proteasome core, a large protease complex with broad specificity involved in protein degradation. This is Proteasome subunit beta from Methanobrevibacter smithii (strain ATCC 35061 / DSM 861 / OCM 144 / PS).